Reading from the N-terminus, the 578-residue chain is 65-kDa microtubule-associated protein 2 (578 aa).

5 coiled-coil regions span residues 64 to 84 (AELL…TTAL), 151 to 184 (DETD…VLEF), 235 to 257 (TLKE…LTDL), 290 to 312 (ALAL…LKSS), and 461 to 489 (AMLD…QQEQ). A compositionally biased stretch (basic and acidic residues) spans 473–494 (REDEKRRLKEQKKQQEQPHTDQ). Residues 473-578 (REDEKRRLKE…SRADPVMASP (106 aa)) are disordered. Phosphoserine occurs at positions 503 and 532. The segment covering 549–558 (KIASPSNIVA) has biased composition (polar residues). 3 positions are modified to phosphoserine: S566, S569, and S577.

This sequence belongs to the MAP65/ASE1 family. As to quaternary structure, forms a dimer. Binds to microtubules (MT). Bundles polymerized MT via the formation of 25-nm crossbridges with centrally located endocytic MT.

It localises to the nucleus. The protein resides in the cytoplasm. It is found in the cytoskeleton. The protein localises to the spindle pole. Its subcellular location is the phragmoplast. Its function is as follows. Microtubule-associated protein that stabilize microtubules (MT). Involved in the regulation of MT organization and dynamics. Confers MT resistance to the drug propyzamide and cold conditions. The protein is 65-kDa microtubule-associated protein 2 (MAP65-2) of Arabidopsis thaliana (Mouse-ear cress).